The sequence spans 474 residues: tRNA-2-methylthio-N(6)-dimethylallyladenosine synthase (474 aa).

In terms of domain architecture, MTTase N-terminal spans 3-120 (KKLLIKTWGC…LPQMIKDSQS (118 aa)). [4Fe-4S] cluster contacts are provided by Cys12, Cys49, Cys83, Cys157, Cys161, and Cys164. Positions 143 to 375 (RADGVTAFVS…QQQINTQAMR (233 aa)) constitute a Radical SAM core domain. The TRAM domain occupies 378–441 (RQMLNTEQRI…TNSLRGELVR (64 aa)).

Belongs to the methylthiotransferase family. MiaB subfamily. As to quaternary structure, monomer. [4Fe-4S] cluster serves as cofactor.

The protein localises to the cytoplasm. It catalyses the reaction N(6)-dimethylallyladenosine(37) in tRNA + (sulfur carrier)-SH + AH2 + 2 S-adenosyl-L-methionine = 2-methylsulfanyl-N(6)-dimethylallyladenosine(37) in tRNA + (sulfur carrier)-H + 5'-deoxyadenosine + L-methionine + A + S-adenosyl-L-homocysteine + 2 H(+). Functionally, catalyzes the methylthiolation of N6-(dimethylallyl)adenosine (i(6)A), leading to the formation of 2-methylthio-N6-(dimethylallyl)adenosine (ms(2)i(6)A) at position 37 in tRNAs that read codons beginning with uridine. In Photobacterium profundum (strain SS9), this protein is tRNA-2-methylthio-N(6)-dimethylallyladenosine synthase.